Consider the following 296-residue polypeptide: Probable cell wall protein PGA41 (296 aa).

A signal peptide spans 1–18; the sequence is MKFTIVLFTLISVTVAAA. Positions 146-212 are enriched in low complexity; it reads IASSTKESSS…ITTISSDSST (67 aa). A disordered region spans residues 146 to 276; sequence IASSTKESSS…PNSSQTAPGA (131 aa). Residues 220 to 245 are compositionally biased toward gly residues; the sequence is QGGGGNSGNNGSNGDGGNDASGGGGV. N-linked (GlcNAc...) asparagine glycans are attached at residues N229 and N268. The segment covering 247–274 has biased composition (low complexity); the sequence is NENEQASSPPSSQSSTNSNQPNSSQTAP. A lipid anchor (GPI-anchor amidated glycine) is attached at G275. Residues 276 to 296 constitute a propeptide, removed in mature form; that stretch reads AANYLSSVSVGTLMILVLGLI.

This sequence belongs to the IHD1 family. The GPI-anchor is attached to the protein in the endoplasmic reticulum and serves to target the protein to the cell surface. There, the glucosamine-inositol phospholipid moiety is cleaved off and the GPI-modified mannoprotein is covalently attached via its lipidless GPI glycan remnant to the 1,6-beta-glucan of the outer cell wall layer.

The protein resides in the secreted. It localises to the cell wall. It is found in the membrane. Functionally, probable GPI-anchored cell wall protein that may be involved in cell wall organization, hyphal growth, as well as in virulence. The polypeptide is Probable cell wall protein PGA41 (PGA41) (Candida albicans (strain SC5314 / ATCC MYA-2876) (Yeast)).